The primary structure comprises 175 residues: ADTNAPLCLCDEPGILGRNQLVTPEVKEKIEKAVEAVAEESGVSGRGFSLFSHHPVFRECGKYECRTVRPEHTRCYNFPPFVHFTSECPVSTRDCEPVFGYTVAGEFRVIVQAPRAGFRQCVWQHKCRYGSNNCGFSGRCTQQRSVVRLVTYNLEKDGFLCESFRTCCGCPCRNY.

Cystine bridges form between cysteine 8-cysteine 167, cysteine 10-cysteine 95, cysteine 60-cysteine 161, cysteine 65-cysteine 121, cysteine 75-cysteine 168, cysteine 88-cysteine 140, cysteine 127-cysteine 170, and cysteine 134-cysteine 172.

Belongs to the coagulin family. As to quaternary structure, coagulogen is cleaved after Arg-18 and Arg-46 by a clotting enzyme contained in the hemocyte and activated by a bacterial endotoxin (lipopolysaccharide). This cleavage releases the peptide C and leaves 2 chains of coagulin, A and B, linked by two disulfide bonds. Coagulin molecules interlink to form a gel. Hemolymph.

Its subcellular location is the secreted. Coagulogen is a gel-forming protein of hemolymph; it hinders the spread of invaders by immobilizing them. This is Coagulogen from Carcinoscorpius rotundicauda (Mangrove horseshoe crab).